Here is a 394-residue protein sequence, read N- to C-terminus: uncharacterized protein (394 aa).

2 positions are modified to phosphoserine: serine 117 and serine 121. 3 disordered regions span residues 177–295, 315–347, and 370–394; these read DSDE…PGTF, KRSI…GSLS, and SSEV…AHRV. Acidic residues predominate over residues 178–190; that stretch reads SDEEDEVDDEEIE. Polar residues-rich tracts occupy residues 191–207 and 216–230; these read SFNS…NSRY and EKQS…VSQI. Composition is skewed to acidic residues over residues 231–263 and 284–295; these read SDDE…DDED and IPDDTDFVPGTF. Polar residues predominate over residues 370-379; that stretch reads SSEVLRNSKS. The residue at position 379 (serine 379) is a Phosphoserine.

It localises to the nucleus. This is an uncharacterized protein from Schizosaccharomyces pombe (strain 972 / ATCC 24843) (Fission yeast).